The primary structure comprises 390 residues: Galactokinase (390 aa).

33–36 (EHTD) lines the substrate pocket. Residues Ser-67 and 124 to 130 (GAGLSSS) contribute to the ATP site. Residues Ser-130 and Glu-162 each contribute to the Mg(2+) site. Asp-174 acts as the Proton acceptor in catalysis. Residue Tyr-224 coordinates substrate.

The protein belongs to the GHMP kinase family. GalK subfamily.

Its subcellular location is the cytoplasm. It catalyses the reaction alpha-D-galactose + ATP = alpha-D-galactose 1-phosphate + ADP + H(+). It functions in the pathway carbohydrate metabolism; galactose metabolism. Functionally, catalyzes the transfer of the gamma-phosphate of ATP to D-galactose to form alpha-D-galactose-1-phosphate (Gal-1-P). In Exiguobacterium sibiricum (strain DSM 17290 / CCUG 55495 / CIP 109462 / JCM 13490 / 255-15), this protein is Galactokinase.